We begin with the raw amino-acid sequence, 80 residues long: Ataxin-8 (80 aa).

Specifically found in brains from SCA8 patients (at protein level).

The protein localises to the nucleus. The sequence is that of Ataxin-8 (ATXN8) from Homo sapiens (Human).